Reading from the N-terminus, the 30-residue chain is GIFLDKLKNFAKGVAQSLLNKASCKLSGQC.

A disulfide bridge connects residues Cys24 and Cys30.

In terms of tissue distribution, expressed by the skin glands.

It localises to the secreted. In terms of biological role, shows antibacterial activity against representative Gram-negative and Gram-positive bacterial species, and hemolytic activity. This is Brevinin-2Ej from Pelophylax ridibundus (Marsh frog).